We begin with the raw amino-acid sequence, 303 residues long: Caspase-7 (303 aa).

Met1 bears the N-acetylmethionine mark. A propeptide spanning residues 1 to 23 (MTDDQDCAAELEKVDSSSEDGVD) is cleaved from the precursor. The disordered stretch occupies residues 1–26 (MTDDQDCAAELEKVDSSSEDGVDAKP). The span at 10–26 (ELEKVDSSSEDGVDAKP) shows a compositional bias: basic and acidic residues. At Ser30 the chain carries Phosphoserine. Residues 38-41 (KKKR) form an exosite region. Positions 76–87 (KNFDKATGMDVR) are loop L1. The active site involves His144. Thr173 bears the Phosphothreonine mark. Residue Cys186 is part of the active site. The loop L2 stretch occupies residues 187-196 (RGTELDDGIQ). The propeptide occupies 199–206 (SGPINDID). A loop L3 region spans residues 226–238 (VPGYYSWRNPGKG). At Ser239 the chain carries Phosphoserine. The tract at residues 274 to 288 (ESQSDDPRFNEKKQI) is loop L4.

It belongs to the peptidase C14A family. Heterotetramer that consists of two anti-parallel arranged heterodimers, each one formed by a 20 kDa (p20) and a 11 kDa (p11) subunit. Interacts with XIAP (via its second BIR domain); inhibiting CASP7 activity. Interacts with BIRC6/bruce. Interacts with ATXN3 (short isoform 1). Interacts with HSPA5. Post-translationally, cleavage by different proteases, such as granzyme B (GZMB), caspase-1 (CASP1), caspase-8 (CASP8) or caspase-9 (CASP9) generate the two active subunits. Its involvement in different programmed cell death processes is probably specified by the protease that activates CASP7. Cleaved and activated by initiator caspases (CASP8 and/or CASP9), leading to execution phase of apoptosis. Cleavage and maturation by GZMB regulates granzyme-mediated programmed cell death. Cleaved and activated by CASP1 in response to bacterial infection. Propeptide domains can also be cleaved efficiently by CASP3. Active heterodimers between the small subunit of caspase-7 and the large subunit of CASP3, and vice versa, also occur. Also cleaved at the N-terminus at alternative sites by CAPN1, leading to its activation. In terms of processing, phosphorylation at Ser-30 and Ser-239 by PAK2 inhibits its activity. Phosphorylation at Ser-30 prevents cleavage and activation by initiator caspase CASP9, while phosphorylation at Ser-239 prevents thiol protease activity by preventing substrate-binding. Ubiquitinated by BIRC6; this activity is inhibited by DIABLO/SMAC. In terms of tissue distribution, highly expressed in heart, lung, liver and kidney. Low levels in spleen, skeletal muscle and testis. No expression in the brain.

It is found in the cytoplasm. The protein localises to the cytosol. Its subcellular location is the nucleus. The protein resides in the secreted. It localises to the extracellular space. The enzyme catalyses Strict requirement for an Asp residue at position P1 and has a preferred cleavage sequence of Asp-Glu-Val-Asp-|-.. Its activity is regulated as follows. During activation, the N-terminal disordered prodomain is removed by cleavage. Concomitantly, double cleavage gives rise to a large Caspase-7 subunit p20 and a small Caspase-7 subunit p11. The two large and two small subunits then assemble to form the active CASP7 complex. Can be cleaved and activated by different caspases, depending on the context. Cleaved and activated by initiator caspases (CASP8 and/or CASP9), leading to execution phase of apoptosis. Cleavage and maturation by GZMB regulates granzyme-mediated programmed cell death. Cleavage and maturation by CASP1 regulates pyroptosis. Inhibited by XIAP, which directly binds to the active site pocket and obstructs substrate entry. Phosphorylation at Ser-30 and Ser-239 by PAK2 inhibits its activity. Inhibited by BIRC6; following inhibition of BIRC6-caspase binding by DIABLO/SMAC, BIRC6 is subjected to caspase cleavage, leading to an increase in active caspases. Its function is as follows. Thiol protease involved in different programmed cell death processes, such as apoptosis, pyroptosis or granzyme-mediated programmed cell death, by proteolytically cleaving target proteins. Has a marked preference for Asp-Glu-Val-Asp (DEVD) consensus sequences, with some plasticity for alternate non-canonical sequences. Its involvement in the different programmed cell death processes is probably determined by upstream proteases that activate CASP7. Acts as an effector caspase involved in the execution phase of apoptosis: following cleavage and activation by initiator caspases (CASP8 and/or CASP9), mediates execution of apoptosis by catalyzing cleavage of proteins, such as CLSPN, PARP1, PTGES3 and YY1. Compared to CASP3, acts as a minor executioner caspase and cleaves a limited set of target proteins. Acts as a key regulator of the inflammatory response in response to bacterial infection by catalyzing cleavage and activation of the sphingomyelin phosphodiesterase SMPD1 in the extracellular milieu, thereby promoting membrane repair. Regulates pyroptosis in intestinal epithelial cells: cleaved and activated by CASP1 in response to S.typhimurium infection, promoting its secretion to the extracellular milieu, where it catalyzes activation of SMPD1, generating ceramides that repair membranes and counteract the action of gasdermin-D (GSDMD) pores. Regulates granzyme-mediated programmed cell death in hepatocytes: cleaved and activated by granzyme B (GZMB) in response to bacterial infection, promoting its secretion to the extracellular milieu, where it catalyzes activation of SMPD1, generating ceramides that repair membranes and counteract the action of perforin (PRF1) pores. Following cleavage by CASP1 in response to inflammasome activation, catalyzes processing and inactivation of PARP1, alleviating the transcription repressor activity of PARP1. Acts as an inhibitor of type I interferon production during virus-induced apoptosis by mediating cleavage of antiviral proteins CGAS, IRF3 and MAVS, thereby preventing cytokine overproduction. Cleaves and activates sterol regulatory element binding proteins (SREBPs). Cleaves phospholipid scramblase proteins XKR4, XKR8 and XKR9. Cleaves BIRC6 following inhibition of BIRC6-caspase binding by DIABLO/SMAC. This Mus musculus (Mouse) protein is Caspase-7.